The chain runs to 343 residues: DNA repair and recombination protein RadA (343 aa).

107–114 (GEFGAGKS) provides a ligand contact to ATP.

It belongs to the eukaryotic RecA-like protein family.

In terms of biological role, involved in DNA repair and in homologous recombination. Binds and assemble on single-stranded DNA to form a nucleoprotein filament. Hydrolyzes ATP in a ssDNA-dependent manner and promotes DNA strand exchange between homologous DNA molecules. The protein is DNA repair and recombination protein RadA of Haloquadratum walsbyi (strain DSM 16790 / HBSQ001).